The following is a 156-amino-acid chain: Endogenous retrovirus group K member 7 Pro protein (156 aa).

The Peptidase A2 domain maps to 21-96 (FEGLVDTGAD…IPLNLWGRDL (76 aa)). The active site involves aspartate 26. The G-patch domain occupies 111 to 156 (YSPTSQKIMTKMGYIPGKGLGKNEDGIKVPVEAKINQEREGIGYPF).

Belongs to the peptidase A2 family. HERV class-II K(HML-2) subfamily. As to quaternary structure, active as a homodimer. In terms of processing, autoproteolytically processed at the N-terminus. Expected C-terminal autoprocessing not detected. The sequence shown is that of the processed Pro protein.

It carries out the reaction Processing at the authentic HIV-1 PR recognition site and release of the mature p17 matrix and the p24 capsid protein, as a result of the cleavage of the -SQNY-|-PIVQ- cleavage site.. Retroviral proteases have roles in processing of the primary translation products and the maturation of the viral particle. Endogenous Pro proteins may have kept, lost or modified their original function during evolution. This endogenous protein has retained most of the characteristics of retroviral proteases. The chain is Endogenous retrovirus group K member 7 Pro protein (ERVK-7) from Homo sapiens (Human).